A 156-amino-acid polypeptide reads, in one-letter code: Small ribosomal subunit protein uS7 (156 aa).

This sequence belongs to the universal ribosomal protein uS7 family. In terms of assembly, part of the 30S ribosomal subunit. Contacts proteins S9 and S11.

Its function is as follows. One of the primary rRNA binding proteins, it binds directly to 16S rRNA where it nucleates assembly of the head domain of the 30S subunit. Is located at the subunit interface close to the decoding center, probably blocks exit of the E-site tRNA. The sequence is that of Small ribosomal subunit protein uS7 from Leifsonia xyli subsp. xyli (strain CTCB07).